The following is a 91-amino-acid chain: UPF0147 protein DKAM_0139 (91 aa).

This sequence belongs to the UPF0147 family.

This is UPF0147 protein DKAM_0139 from Desulfurococcus amylolyticus (strain DSM 18924 / JCM 16383 / VKM B-2413 / 1221n) (Desulfurococcus kamchatkensis).